Reading from the N-terminus, the 347-residue chain is Phosphate acyltransferase (347 aa).

The protein belongs to the PlsX family. Homodimer. Probably interacts with PlsY.

It is found in the cytoplasm. The catalysed reaction is a fatty acyl-[ACP] + phosphate = an acyl phosphate + holo-[ACP]. It functions in the pathway lipid metabolism; phospholipid metabolism. In terms of biological role, catalyzes the reversible formation of acyl-phosphate (acyl-PO(4)) from acyl-[acyl-carrier-protein] (acyl-ACP). This enzyme utilizes acyl-ACP as fatty acyl donor, but not acyl-CoA. The chain is Phosphate acyltransferase from Pediococcus pentosaceus (strain ATCC 25745 / CCUG 21536 / LMG 10740 / 183-1w).